The sequence spans 404 residues: Propionate kinase (404 aa).

It belongs to the acetokinase family. PduW subfamily.

It is found in the cytoplasm. It carries out the reaction propanoate + ATP = propanoyl phosphate + ADP. It participates in polyol metabolism; 1,2-propanediol degradation. Works with phosphate acetyltransferase (pta) to capture exogenous propionate and regenerate propionyl-CoA during degradation of 1,2-propanediol (1,2-PD). The sequence is that of Propionate kinase from Escherichia fergusonii (strain ATCC 35469 / DSM 13698 / CCUG 18766 / IAM 14443 / JCM 21226 / LMG 7866 / NBRC 102419 / NCTC 12128 / CDC 0568-73).